The chain runs to 176 residues: MDKYVQIGLITKPHGLRGEVCVVSYADSPFLMQERIFLQAGKGPCVPYRVRSSRRHSGTELLLLEGIDDRNAAEKLRQHKVLIPHAELPELEDDEVYIEDILGFTVVLDEDGSTLGTLTAFSAPTPEQEVWEITTPDGKEVLFPAAEEFVAEIDVDSETIRITPPPGLLEIYLSGS.

One can recognise a PRC barrel domain in the interval 93–168; sequence DDEVYIEDIL…TIRITPPPGL (76 aa).

This sequence belongs to the RimM family. Binds ribosomal protein uS19.

The protein resides in the cytoplasm. Its function is as follows. An accessory protein needed during the final step in the assembly of 30S ribosomal subunit, possibly for assembly of the head region. Essential for efficient processing of 16S rRNA. May be needed both before and after RbfA during the maturation of 16S rRNA. It has affinity for free ribosomal 30S subunits but not for 70S ribosomes. The chain is Ribosome maturation factor RimM from Oleidesulfovibrio alaskensis (strain ATCC BAA-1058 / DSM 17464 / G20) (Desulfovibrio alaskensis).